The chain runs to 654 residues: tRNA 5-methylaminomethyl-2-thiouridine biosynthesis bifunctional protein MnmC (654 aa).

Residues 1–236 are tRNA (mnm(5)s(2)U34)-methyltransferase; sequence MPTLLQHAQI…KWEVMSGAYV (236 aa). Residues 262–654 are FAD-dependent cmnm(5)s(2)U34 oxidoreductase; sequence IGAGLAGSSS…FGLRRLIRGK (393 aa).

The protein in the N-terminal section; belongs to the methyltransferase superfamily. tRNA (mnm(5)s(2)U34)-methyltransferase family. It in the C-terminal section; belongs to the DAO family. The cofactor is FAD.

It is found in the cytoplasm. It carries out the reaction 5-aminomethyl-2-thiouridine(34) in tRNA + S-adenosyl-L-methionine = 5-methylaminomethyl-2-thiouridine(34) in tRNA + S-adenosyl-L-homocysteine + H(+). Its function is as follows. Catalyzes the last two steps in the biosynthesis of 5-methylaminomethyl-2-thiouridine (mnm(5)s(2)U) at the wobble position (U34) in tRNA. Catalyzes the FAD-dependent demodification of cmnm(5)s(2)U34 to nm(5)s(2)U34, followed by the transfer of a methyl group from S-adenosyl-L-methionine to nm(5)s(2)U34, to form mnm(5)s(2)U34. The chain is tRNA 5-methylaminomethyl-2-thiouridine biosynthesis bifunctional protein MnmC from Pseudomonas putida (strain ATCC 47054 / DSM 6125 / CFBP 8728 / NCIMB 11950 / KT2440).